We begin with the raw amino-acid sequence, 198 residues long: Na(+)-translocating NADH-quinone reductase subunit E (198 aa).

Transmembrane regions (helical) follow at residues Ser-11 to Val-31, Val-35 to Val-55, Phe-77 to Phe-97, Gly-110 to Val-130, Val-140 to Leu-160, and Leu-176 to Ile-196.

The protein belongs to the NqrDE/RnfAE family. As to quaternary structure, composed of six subunits; NqrA, NqrB, NqrC, NqrD, NqrE and NqrF.

It localises to the cell inner membrane. The catalysed reaction is a ubiquinone + n Na(+)(in) + NADH + H(+) = a ubiquinol + n Na(+)(out) + NAD(+). Its function is as follows. NQR complex catalyzes the reduction of ubiquinone-1 to ubiquinol by two successive reactions, coupled with the transport of Na(+) ions from the cytoplasm to the periplasm. NqrA to NqrE are probably involved in the second step, the conversion of ubisemiquinone to ubiquinol. The polypeptide is Na(+)-translocating NADH-quinone reductase subunit E (Mannheimia succiniciproducens (strain KCTC 0769BP / MBEL55E)).